A 163-amino-acid chain; its full sequence is UPF0416 protein RBE_0909 (163 aa).

Belongs to the UPF0416 family.

This is UPF0416 protein RBE_0909 from Rickettsia bellii (strain RML369-C).